Reading from the N-terminus, the 436-residue chain is MTEATYYFIGIKGSGMSALALVLHDLGHQVLGSDITQYTFTQKGLAAAGIKMLPFDPANLKPGYTVIAGNSFTDDHPEIKRAKELGLTIYRYHEFLGKLIEGYTSIGVAGAHGKTSTTGLLAHTLSGVAKTSYLIGDGTGKGIPDSQFFVFEADEYRRHFLAYHPDYMIMTNIDFDHPDYYTGFEDVYDAFETEANQVKKAIVAWGDDPWLRKLKAKVPVYYYGISDRDDFRARNVDRDTKGSSFDAYFHDQLIGHFFVPLFGEHSVLNALAVVAVAHMEKLDAKLIARELGNFSGVKRRFAEKDLKDMIIVDDYAHHPNEIKATLDAARQKYPDKAIIAVFQPHTFSRTQAYEPQYVQVLSQADQTFLTPIFSSAREKTGKIRSEDITAQIKGAAVIHQEDMKPLLQYHNAVVVFMGAGDIQKYEKAYETLLAEE.

110–116 provides a ligand contact to ATP; it reads GAHGKTS.

It belongs to the MurCDEF family.

It is found in the cytoplasm. The enzyme catalyses UDP-N-acetyl-alpha-D-muramate + L-alanine + ATP = UDP-N-acetyl-alpha-D-muramoyl-L-alanine + ADP + phosphate + H(+). Its pathway is cell wall biogenesis; peptidoglycan biosynthesis. Functionally, cell wall formation. The sequence is that of UDP-N-acetylmuramate--L-alanine ligase from Lacticaseibacillus casei (strain BL23) (Lactobacillus casei).